The primary structure comprises 446 residues: C-type lectin domain family 18 member A (446 aa).

Positions 1 to 26 (MLHPETSPGRGHLLAVLLALLGTAWA) are cleaved as a signal peptide. Residues 52-182 (LSLHNRLRSW…AAIEAFVCAY (131 aa)) form the SCP domain. N-linked (GlcNAc...) asparagine glycosylation occurs at Asn-144. In terms of domain architecture, EGF-like spans 228–261 (PRNPCRMSCQNHGRLNISTCHCHCPPGYTGRYCQ). 4 cysteine pairs are disulfide-bonded: Cys-236–Cys-249, Cys-251–Cys-260, Cys-327–Cys-432, and Cys-408–Cys-424. A C-type lectin domain is found at 306-433 (IDGDCFMVSS…CKTRNRYICQ (128 aa)).

Post-translationally, N-glycosylated. Dectected in all cell lines tested and in peripheral blood cells.

Its subcellular location is the secreted. The protein resides in the endoplasmic reticulum. It localises to the golgi apparatus. It is found in the endosome. Its function is as follows. Binds polysaccharides in a Ca(2+)-independent manner with a preferentially binding to fucoidan, beta-glucans and galactans. The polypeptide is C-type lectin domain family 18 member A (CLEC18A) (Homo sapiens (Human)).